The primary structure comprises 319 residues: MENFPIINLENLCGAERDATMEMIKDACENWGFFELVNHGIPHEVMDTVEKFTKGHYKKCMEQRFKELVASKGLEAVQAEVTDLDWESTFFLRHLPVSNISEVPDLDDEYREVMRDFAKRLEKLAEELLDLLCENLGLEKGYLKKAFYGSKGPNFGTKVSNYPPCPKPDLIKGLRAHTDAGGIILLFQDDKVSGLQLLKDDQWIDVPPMRHSIVINLGDQLEVITNGKYKSVPHRVIAQTDGTRMSLASFYNPASDAVIYPAPALVERDAEENKQIYPKFVFDDYMKLYARLKFQAKEPRFEAMKAMEADVKIDPVATV.

Residues 153–253 (PNFGTKVSNY…RMSLASFYNP (101 aa)) enclose the Fe2OG dioxygenase domain. Residues H177, D179, and H234 each contribute to the Fe cation site.

This sequence belongs to the iron/ascorbate-dependent oxidoreductase family. Fe cation serves as cofactor.

It catalyses the reaction 1-aminocyclopropane-1-carboxylate + L-ascorbate + O2 = ethene + L-dehydroascorbate + hydrogen cyanide + CO2 + 2 H2O. The protein operates within alkene biosynthesis; ethylene biosynthesis via S-adenosyl-L-methionine; ethylene from S-adenosyl-L-methionine: step 2/2. This chain is 1-aminocyclopropane-1-carboxylate oxidase 4 (ACO4), found in Petunia hybrida (Petunia).